The primary structure comprises 341 residues: tRNA N6-adenosine threonylcarbamoyltransferase (341 aa).

2 residues coordinate Fe cation: His-115 and His-119. Substrate contacts are provided by residues Ile-137–Gly-141, Asp-170, Gly-183, Asp-187, and Asn-276. Residue Asp-304 participates in Fe cation binding.

Belongs to the KAE1 / TsaD family. Requires Fe(2+) as cofactor.

The protein localises to the cytoplasm. It carries out the reaction L-threonylcarbamoyladenylate + adenosine(37) in tRNA = N(6)-L-threonylcarbamoyladenosine(37) in tRNA + AMP + H(+). In terms of biological role, required for the formation of a threonylcarbamoyl group on adenosine at position 37 (t(6)A37) in tRNAs that read codons beginning with adenine. Is involved in the transfer of the threonylcarbamoyl moiety of threonylcarbamoyl-AMP (TC-AMP) to the N6 group of A37, together with TsaE and TsaB. TsaD likely plays a direct catalytic role in this reaction. The polypeptide is tRNA N6-adenosine threonylcarbamoyltransferase (Staphylococcus aureus (strain MRSA252)).